The chain runs to 287 residues: ATP synthase gamma chain (287 aa).

This sequence belongs to the ATPase gamma chain family. As to quaternary structure, F-type ATPases have 2 components, CF(1) - the catalytic core - and CF(0) - the membrane proton channel. CF(1) has five subunits: alpha(3), beta(3), gamma(1), delta(1), epsilon(1). CF(0) has three main subunits: a, b and c.

The protein localises to the cell inner membrane. Its function is as follows. Produces ATP from ADP in the presence of a proton gradient across the membrane. The gamma chain is believed to be important in regulating ATPase activity and the flow of protons through the CF(0) complex. This is ATP synthase gamma chain from Escherichia coli (strain 55989 / EAEC).